A 1337-amino-acid polypeptide reads, in one-letter code: DNA mismatch repair protein Msh6 (1337 aa).

In terms of domain architecture, PWWP spans 68 to 130 (PGDLVWAKME…IKYLRPYKGS (63 aa)). Positions 170–310 (AVCSEPSDTE…SEAPKRAAPV (141 aa)) are disordered. The span at 176–187 (SDTEEAEEEEME) shows a compositional bias: acidic residues. Residues 226–248 (VLDSDSDRDGSDVEFKPDVKEAS) show a composition bias toward basic and acidic residues. Positions 257–272 (DENEATDVETDEESIE) are enriched in acidic residues. Residues 279–292 (PSKRKRGNVSKPSK) show a composition bias toward basic residues. Residues 294–305 (SSLENEHSEAPK) are compositionally biased toward basic and acidic residues. Residue 1111-1118 (GPNMGGKS) participates in ATP binding.

Belongs to the DNA mismatch repair MutS family.

Its subcellular location is the nucleus. Its function is as follows. Component of the post-replicative DNA mismatch repair system (MMR). Involved in B cell growth by positively regulating B cell proliferation and controlling replication efficiency. Controls cell cycle to prevent re-replication and defects in DNA damage-induced G2 checkpoint. Doesn't seem to counteract or control the immunoglobulin gene conversion (Ig GC) and to contribute to guanine/uracil mismatch repair. The sequence is that of DNA mismatch repair protein Msh6 from Gallus gallus (Chicken).